A 210-amino-acid chain; its full sequence is MKNFIFNHPLISDKLSKMRDVNTGYNFFKQLLTEITTLMMYEVGKGYELEEISVTTPLATTKAHKLKHNFVIVPILRAGLGMVDGVHNVIPTARVGHIGLYRDEKTFQPVEYYSKFPQTMDDGHVIVLDPMLATGASVIKAISLVKNIQPKKPRSIKFMGLLGAPEGLKALNQAHPDVDVYLACLDEKLNDKNYIYPGLGDAGDRIFGTK.

5-phospho-alpha-D-ribose 1-diphosphate contacts are provided by residues R77, R102, and 129-137 (DPMLATGAS). Residues I195 and 200–202 (GDA) each bind uracil. 5-phospho-alpha-D-ribose 1-diphosphate is bound at residue D201.

It belongs to the UPRTase family. Mg(2+) is required as a cofactor.

It catalyses the reaction UMP + diphosphate = 5-phospho-alpha-D-ribose 1-diphosphate + uracil. The protein operates within pyrimidine metabolism; UMP biosynthesis via salvage pathway; UMP from uracil: step 1/1. With respect to regulation, allosterically activated by GTP. Catalyzes the conversion of uracil and 5-phospho-alpha-D-ribose 1-diphosphate (PRPP) to UMP and diphosphate. This chain is Uracil phosphoribosyltransferase, found in Mycoplasmoides gallisepticum (strain R(low / passage 15 / clone 2)) (Mycoplasma gallisepticum).